A 103-amino-acid chain; its full sequence is Protein Rev (103 aa).

Ser-5 bears the Phosphoserine; by host CK2 mark. Residues 17-25 (IIKILYQSN) are homomultimerization. Disordered stretches follow at residues 24-49 (SNPC…RRQA) and 82-103 (IRDP…TKDN). The Nuclear localization signal and RNA-binding (RRE) signature appears at 33–49 (SRNARKNRRRRWRRRQA). Residues 35 to 48 (NARKNRRRRWRRRQ) show a composition bias toward basic residues. The Nuclear export signal and binding to XPO1 signature appears at 72-83 (VDLPPLEQLNIR).

The protein belongs to the HIV-1 REV protein family. As to quaternary structure, homomultimer; when bound to the RRE. Multimeric assembly is essential for activity and may involve XPO1. Binds to human KPNB1, XPO1, TNPO1, RANBP5 and IPO7. Interacts with the viral Integrase. Interacts with human KHDRBS1. Interacts with human NAP1; this interaction decreases Rev multimerization and stimulates its activity. Interacts with human DEAD-box helicases DDX3 and DDX24; these interactions may serve for viral RNA export to the cytoplasm and packaging, respectively. Interacts with human PSIP1; this interaction may inhibit HIV-1 DNA integration by promoting dissociation of the Integrase-LEDGF/p75 complex. Asymmetrically arginine dimethylated at one site by host PRMT6. Methylation impairs the RNA-binding activity and export of viral RNA from the nucleus to the cytoplasm. Post-translationally, phosphorylated by protein kinase CK2. Presence of, and maybe binding to the N-terminus of the regulatory beta subunit of CK2 is necessary for CK2-mediated Rev's phosphorylation.

It is found in the host nucleus. It localises to the host nucleolus. The protein localises to the host cytoplasm. Its function is as follows. Escorts unspliced or incompletely spliced viral pre-mRNAs (late transcripts) out of the nucleus of infected cells. These pre-mRNAs carry a recognition sequence called Rev responsive element (RRE) located in the env gene, that is not present in fully spliced viral mRNAs (early transcripts). This function is essential since most viral proteins are translated from unspliced or partially spliced pre-mRNAs which cannot exit the nucleus by the pathway used by fully processed cellular mRNAs. Rev itself is translated from a fully spliced mRNA that readily exits the nucleus. Rev's nuclear localization signal (NLS) binds directly to KPNB1/Importin beta-1 without previous binding to KPNA1/Importin alpha-1. KPNB1 binds to the GDP bound form of RAN (Ran-GDP) and targets Rev to the nucleus. In the nucleus, the conversion from Ran-GDP to Ran-GTP dissociates Rev from KPNB1 and allows Rev's binding to the RRE in viral pre-mRNAs. Rev multimerization on the RRE via cooperative assembly exposes its nuclear export signal (NES) to the surface. Rev can then form a complex with XPO1/CRM1 and Ran-GTP, leading to nuclear export of the complex. Conversion from Ran-GTP to Ran-GDP mediates dissociation of the Rev/RRE/XPO1/RAN complex, so that Rev can return to the nucleus for a subsequent round of export. Beside KPNB1, also seems to interact with TNPO1/Transportin-1, RANBP5/IPO5 and IPO7/RANBP7 for nuclear import. The nucleoporin-like HRB/RIP is an essential cofactor that probably indirectly interacts with Rev to release HIV RNAs from the perinuclear region to the cytoplasm. This Human immunodeficiency virus type 1 group O (isolate MVP5180) (HIV-1) protein is Protein Rev.